The chain runs to 279 residues: Large ribosomal subunit protein uL2 (279 aa).

Disordered regions lie at residues 1 to 59 and 224 to 279; these read MGIR…GGHK and VAMN…KNKR. The span at 50–59 shows a compositional bias: basic residues; the sequence is TTRHKGGGHK. A compositionally biased stretch (basic and acidic residues) spans 253–268; that stretch reads REGRTRRPNKESDKLI. Positions 269 to 279 are enriched in basic residues; the sequence is VRRRRTGKNKR.

The protein belongs to the universal ribosomal protein uL2 family. In terms of assembly, part of the 50S ribosomal subunit. Forms a bridge to the 30S subunit in the 70S ribosome.

Functionally, one of the primary rRNA binding proteins. Required for association of the 30S and 50S subunits to form the 70S ribosome, for tRNA binding and peptide bond formation. It has been suggested to have peptidyltransferase activity; this is somewhat controversial. Makes several contacts with the 16S rRNA in the 70S ribosome. The chain is Large ribosomal subunit protein uL2 from Pseudarthrobacter chlorophenolicus (strain ATCC 700700 / DSM 12829 / CIP 107037 / JCM 12360 / KCTC 9906 / NCIMB 13794 / A6) (Arthrobacter chlorophenolicus).